A 217-amino-acid chain; its full sequence is Growth hormone variant (217 aa).

Positions 1–26 (MAAGSRTSLLLAFGLLCLPWLQEGSA) are cleaved as a signal peptide. 2 disulfides stabilise this stretch: C79–C191 and C208–C215. S132 carries the post-translational modification Phosphoserine. The N-linked (GlcNAc...) asparagine glycan is linked to N166. S176 carries the phosphoserine modification.

This sequence belongs to the somatotropin/prolactin family. In terms of tissue distribution, expressed in the placenta.

It localises to the secreted. Functionally, plays an important role in growth control. Its major role in stimulating body growth is to stimulate the liver and other tissues to secrete IGF1. It stimulates both the differentiation and proliferation of myoblasts. It also stimulates amino acid uptake and protein synthesis in muscle and other tissues. The protein is Growth hormone variant (GH2) of Pan troglodytes (Chimpanzee).